The primary structure comprises 312 residues: Pantothenate kinase (312 aa).

92–99 (GSVAVGKS) contacts ATP.

The protein belongs to the prokaryotic pantothenate kinase family.

The protein resides in the cytoplasm. The enzyme catalyses (R)-pantothenate + ATP = (R)-4'-phosphopantothenate + ADP + H(+). Its pathway is cofactor biosynthesis; coenzyme A biosynthesis; CoA from (R)-pantothenate: step 1/5. This chain is Pantothenate kinase (coaA), found in Vibrio cholerae serotype O1 (strain ATCC 39315 / El Tor Inaba N16961).